Here is a 451-residue protein sequence, read N- to C-terminus: MNTTAYASPPRDMHPRSTMPSLHDTTYRSGPPHQGAPYSMPQTMASQHSTISAYEQYNNSLPVSRPPPPEHLPSSEAVSSFSIGLPGQEPSPRSITVDGRKYTLEVQQQPKRARMCGFGDKDRRPITPPPCVKLSITEIATGKEVDVNNIEHGMFVLNVDLWSADGERPVNLVRHSQTSPSISATVPVSYTQIQGGAAAYSSLLPGQSQREPTSPTYGSAPPFQGAGFSPFPGPPQVSAYSQQQPGQQSGYGGNPNYPPPNGYQVAPQQSNYYYPQPSQSIPSHNNQDPYPSRPFTPQDLGIGRIPISQTNPPQGMFTRNLIGSLSASAFRLTDPDDRIGIWFVLQDLSVRTEGDFRLRFSFVNVGVPSAPQNNANSSCSVNTGKAPVLASCFSEVFKVYSAKKFPGVVESTPLSKCFATQGIKIPIRKDGKDGPGKGGKDGSRGDDDDDY.

Disordered regions lie at residues 1-95 (MNTT…PRSI), 205-312 (PGQS…QTNP), and 426-451 (PIRK…DDDY). Composition is skewed to polar residues over residues 18–28 (TMPSLHDTTYR), 40–62 (MPQT…NSLP), and 205–217 (PGQS…SPTY). The 337-residue stretch at 92–428 (PRSITVDGRK…ATQGIKIPIR (337 aa)) folds into the Velvet domain. A compositionally biased stretch (low complexity) spans 267-283 (PQQSNYYYPQPSQSIPS). Positions 427-445 (IRKDGKDGPGKGGKDGSRG) are enriched in basic and acidic residues.

It belongs to the velvet family. VelB subfamily. Component of the heterotrimeric velvet complex composed of LAE1, VEL1 and VEL2; VEL1 acting as a bridging protein between LAE1 and VEL2. Forms a heterodimeric complex with VOS1; the formation of the VEL2-VOS1 complex is light-dependent.

It localises to the nucleus. Its subcellular location is the cytoplasm. Component of the velvet transcription factor complex that controls sexual/asexual developmental ratio in response to light, promoting sexual development in the darkness while stimulating asexual sporulation under illumination. The velvet complex acts as a global regulator for secondary metabolite gene expression. Component of the VEL2-VOS1 heterodimeric complex that plays a dual role in activating genes associated with spore maturation and repressing certain development-associated genes. The VEL2-VOS1 complex binds DNA through the DNA-binding domain of VOS1 that recognizes an 11-nucleotide consensus sequence 5'-CTGGCCGCGGC-3' consisting of two motifs in the promoters of key developmental regulatory genes. Controls the expression of the oxalic acid and melanin gene clusters. Involved in the resistance to oxidative stress. Required for full virulence. This is Velvet complex subunit 2 from Botryotinia fuckeliana (strain B05.10) (Noble rot fungus).